The primary structure comprises 91 residues: Large ribosomal subunit protein uL23c (91 aa).

The protein belongs to the universal ribosomal protein uL23 family. In terms of assembly, part of the 50S ribosomal subunit.

It localises to the plastid. The protein localises to the chloroplast. Binds to 23S rRNA. The protein is Large ribosomal subunit protein uL23c (rpl23) of Marchantia polymorpha (Common liverwort).